Reading from the N-terminus, the 441-residue chain is Methylenetetrahydrofolate--tRNA-(uracil-5-)-methyltransferase TrmFO (441 aa).

10 to 15 is an FAD binding site; it reads GAGLAG.

It belongs to the MnmG family. TrmFO subfamily. The cofactor is FAD.

It is found in the cytoplasm. It carries out the reaction uridine(54) in tRNA + (6R)-5,10-methylene-5,6,7,8-tetrahydrofolate + NADH + H(+) = 5-methyluridine(54) in tRNA + (6S)-5,6,7,8-tetrahydrofolate + NAD(+). It catalyses the reaction uridine(54) in tRNA + (6R)-5,10-methylene-5,6,7,8-tetrahydrofolate + NADPH + H(+) = 5-methyluridine(54) in tRNA + (6S)-5,6,7,8-tetrahydrofolate + NADP(+). Its function is as follows. Catalyzes the folate-dependent formation of 5-methyl-uridine at position 54 (M-5-U54) in all tRNAs. The protein is Methylenetetrahydrofolate--tRNA-(uracil-5-)-methyltransferase TrmFO of Desulforamulus reducens (strain ATCC BAA-1160 / DSM 100696 / MI-1) (Desulfotomaculum reducens).